The primary structure comprises 384 residues: Putative aminohydrolase MTH_994 (384 aa).

Residues His-60, His-62, His-207, and Asp-291 each coordinate Zn(2+).

The protein belongs to the metallo-dependent hydrolases superfamily. ATZ/TRZ family.

This is Putative aminohydrolase MTH_994 from Methanothermobacter thermautotrophicus (strain ATCC 29096 / DSM 1053 / JCM 10044 / NBRC 100330 / Delta H) (Methanobacterium thermoautotrophicum).